We begin with the raw amino-acid sequence, 194 residues long: Interleukin-18 (194 aa).

The propeptide occupies 1 to 36 (MAAMSEEGSCVNFKEMMFIDNTLYLIPEDNGDLESD).

Belongs to the IL-1 family. In terms of assembly, forms a ternary complex with ligand-binding receptor subunit IL18R1 and signaling receptor subunit IL18RAP at the plasma membrane. Mature IL18 first binds to IL18R1 forming a low affinity binary complex, which then interacts with IL18RAP to form a high affinity ternary complex that signals inside the cell. Interacts with cargo receptor TMED10; the interaction mediates the translocation from the cytoplasm into the ERGIC (endoplasmic reticulum-Golgi intermediate compartment) and thereby secretion. The pro-IL-18 precursor is processed by CASP1 to yield its mature, active form. The pro-IL-18 precursor is however not processed by Casp4/Casp11 in rodents. The pro-IL-18 precursor features autoinhibitory interactions between the propeptide and the post-cleavage-site region, preventing recognition by the IL18R1 receptor. Processing by CASP1 induces conformational changes to generate critical receptor-binding sites. The mature form is then secreted and released in the extracellular milieu by passing through the gasdermin-D (GSDMD) pore. In contrast, cleavage by CASP3 inactivates IL18.

Its subcellular location is the cytoplasm. It is found in the cytosol. The protein resides in the secreted. Functionally, pro-inflammatory cytokine primarily involved in epithelial barrier repair, polarized T-helper 1 (Th1) cell and natural killer (NK) cell immune responses. Upon binding to IL18R1 and IL18RAP, forms a signaling ternary complex which activates NF-kappa-B, triggering synthesis of inflammatory mediators. Synergizes with IL12/interleukin-12 to induce IFNG synthesis from T-helper 1 (Th1) cells and natural killer (NK) cells. Involved in transduction of inflammation downstream of pyroptosis: its mature form is specifically released in the extracellular milieu by passing through the gasdermin-D (GSDMD) pore. The sequence is that of Interleukin-18 (Il18) from Rattus norvegicus (Rat).